The primary structure comprises 252 residues: MAVISMKQLLEAGVHFGHQTRRWNPKMAEYIFTERNGIYIIDLQKTVKKVDDAYFFIREIAMNGQDVLFVGTKKQAQDSIREEAERSGQFFVNNRWLGGMLTNFKTITKRINRLHQLNAMETDGTFEVLPKKEVSKLKKEMADLEKNLGGIKNMKKLPGAMFVVDPRKERNAILEAKRLGIPVVAIVDTNCDPDEVDFVIPGNDDAIRAVKLIAAKMADAVIEGRQGEQLAETPVETAEVAEEAQVAVEAAE.

It belongs to the universal ribosomal protein uS2 family.

This is Small ribosomal subunit protein uS2 from Ruminiclostridium cellulolyticum (strain ATCC 35319 / DSM 5812 / JCM 6584 / H10) (Clostridium cellulolyticum).